Here is a 432-residue protein sequence, read N- to C-terminus: Trigger factor (432 aa).

A PPIase FKBP-type domain is found at 161–246; that stretch reads EDRVTIDFTG…LKKVEERELP (86 aa).

This sequence belongs to the FKBP-type PPIase family. Tig subfamily.

Its subcellular location is the cytoplasm. It carries out the reaction [protein]-peptidylproline (omega=180) = [protein]-peptidylproline (omega=0). Involved in protein export. Acts as a chaperone by maintaining the newly synthesized protein in an open conformation. Functions as a peptidyl-prolyl cis-trans isomerase. The chain is Trigger factor from Salmonella typhi.